Reading from the N-terminus, the 335-residue chain is Probable calcium-binding protein CML49 (335 aa).

Positions 1 to 10 (MSGYPPSSQG) are enriched in low complexity. The disordered stretch occupies residues 1 to 154 (MSGYPPSSQG…PQASYGSPFA (154 aa)). Pro residues predominate over residues 30-45 (NPPPYGSSGSNPPPPY). Positions 46–63 (GSSASSPYAVPYGAQPAP) are enriched in low complexity. Positions 110–141 (DYGGYGGAPQQSGHGGGYGGAPQQSGHGGGYG) are enriched in gly residues. EF-hand domains follow at residues 164–199 (GTDP…YNQS) and 230–265 (FSLQ…LGFS). D177, D179, S181, E188, D243, D245, S247, R249, and E254 together coordinate Ca(2+).

Functionally, potential calcium sensor. The chain is Probable calcium-binding protein CML49 (CML49) from Arabidopsis thaliana (Mouse-ear cress).